The sequence spans 622 residues: Phosphatidylinositol 4-kinase gamma 6 (622 aa).

One can recognise a Ubiquitin-like; degenerate domain in the interval 38 to 95; the sequence is RRVFVQTDTGCVLGVELDRNDNVHTVKKRLQIAFNFPTEESSLTFGDMVLKNDLSAVR. The region spanning 158-459 is the PI3K/PI4K catalytic domain; the sequence is GVEPIPVNGG…LTTEQDVLSP (302 aa). The tract at residues 164 to 170 is G-loop; sequence VNGGLGG. ATP is bound by residues 165–171, Lys-186, and 277–280; these read NGGLGGA and QKFV. Residues 310–318 are catalytic loop; it reads LNTDRHGGN. The interval 339–365 is activation loop; it reads PIDHGLCLPETLEDPYFEWIHWPQASI. ATP is bound at residue Asp-341. Ser-565 is modified (phosphoserine).

It belongs to the PI3/PI4-kinase family. Type II PI4K subfamily.

It carries out the reaction a 1,2-diacyl-sn-glycero-3-phospho-(1D-myo-inositol) + ATP = a 1,2-diacyl-sn-glycero-3-phospho-(1D-myo-inositol 4-phosphate) + ADP + H(+). In terms of biological role, the phosphorylation of phosphatidylinositol (PI) to PI4P is the first committed step in the generation of phosphatidylinositol 4,5-bisphosphate (PIP2), a precursor of the second messenger inositol 1,4,5-trisphosphate (InsP3). The chain is Phosphatidylinositol 4-kinase gamma 6 (PI4KG6) from Arabidopsis thaliana (Mouse-ear cress).